Consider the following 413-residue polypeptide: Alpha-1-antitrypsin-like protein CM55-MS (413 aa).

The N-terminal stretch at 1–24 (MPSSISWGLLLLAALSCLGPGSLA) is a signal peptide. Glutamine 25 is modified (pyrrolidone carboxylic acid). Residues asparagine 65, asparagine 102, asparagine 165, and asparagine 266 are each glycosylated (N-linked (GlcNAc...) asparagine). Positions 368-387 (GATVGGITFMSRPKEVIFDR) are RCL.

The protein belongs to the serpin family. Expressed in liver.

The protein resides in the secreted. Functionally, serine protease inhibitor. In Tamias sibiricus (Siberian chipmunk), this protein is Alpha-1-antitrypsin-like protein CM55-MS.